The sequence spans 402 residues: Tryptophan synthase beta chain 2 (402 aa).

The residue at position 97 (lysine 97) is an N6-(pyridoxal phosphate)lysine.

The protein belongs to the TrpB family. In terms of assembly, tetramer of two alpha and two beta chains. Requires pyridoxal 5'-phosphate as cofactor.

It catalyses the reaction (1S,2R)-1-C-(indol-3-yl)glycerol 3-phosphate + L-serine = D-glyceraldehyde 3-phosphate + L-tryptophan + H2O. The protein operates within amino-acid biosynthesis; L-tryptophan biosynthesis; L-tryptophan from chorismate: step 5/5. Functionally, the beta subunit is responsible for the synthesis of L-tryptophan from indole and L-serine. This Wolinella succinogenes (strain ATCC 29543 / DSM 1740 / CCUG 13145 / JCM 31913 / LMG 7466 / NCTC 11488 / FDC 602W) (Vibrio succinogenes) protein is Tryptophan synthase beta chain 2 (trpB2).